Here is a 519-residue protein sequence, read N- to C-terminus: ATP synthase subunit alpha 1 (519 aa).

172–179 (GDRQTGKT) contributes to the ATP binding site.

The protein belongs to the ATPase alpha/beta chains family. In terms of assembly, F-type ATPases have 2 components, CF(1) - the catalytic core - and CF(0) - the membrane proton channel. CF(1) has five subunits: alpha(3), beta(3), gamma(1), delta(1), epsilon(1). CF(0) has three main subunits: a(1), b(2) and c(9-12). The alpha and beta chains form an alternating ring which encloses part of the gamma chain. CF(1) is attached to CF(0) by a central stalk formed by the gamma and epsilon chains, while a peripheral stalk is formed by the delta and b chains.

The protein localises to the cell inner membrane. The enzyme catalyses ATP + H2O + 4 H(+)(in) = ADP + phosphate + 5 H(+)(out). In terms of biological role, produces ATP from ADP in the presence of a proton gradient across the membrane. The alpha chain is a regulatory subunit. The sequence is that of ATP synthase subunit alpha 1 from Psychromonas ingrahamii (strain DSM 17664 / CCUG 51855 / 37).